A 145-amino-acid polypeptide reads, in one-letter code: D-aminoacyl-tRNA deacylase (145 aa).

A Gly-cisPro motif, important for rejection of L-amino acids motif is present at residues Gly137–Pro138.

Belongs to the DTD family. In terms of assembly, homodimer.

Its subcellular location is the cytoplasm. It catalyses the reaction glycyl-tRNA(Ala) + H2O = tRNA(Ala) + glycine + H(+). The catalysed reaction is a D-aminoacyl-tRNA + H2O = a tRNA + a D-alpha-amino acid + H(+). Its function is as follows. An aminoacyl-tRNA editing enzyme that deacylates mischarged D-aminoacyl-tRNAs. Also deacylates mischarged glycyl-tRNA(Ala), protecting cells against glycine mischarging by AlaRS. Acts via tRNA-based rather than protein-based catalysis; rejects L-amino acids rather than detecting D-amino acids in the active site. By recycling D-aminoacyl-tRNA to D-amino acids and free tRNA molecules, this enzyme counteracts the toxicity associated with the formation of D-aminoacyl-tRNA entities in vivo and helps enforce protein L-homochirality. The polypeptide is D-aminoacyl-tRNA deacylase (Lactobacillus gasseri (strain ATCC 33323 / DSM 20243 / BCRC 14619 / CIP 102991 / JCM 1131 / KCTC 3163 / NCIMB 11718 / NCTC 13722 / AM63)).